The primary structure comprises 1228 residues: Apical endosomal glycoprotein (1228 aa).

Residues 1 to 21 (MCLPSHLLSTWVLFMAAQSLG) form the signal peptide. At 23 to 1159 (TWLPNHCRSP…GEVAAPVSVP (1137 aa)) the chain is on the extracellular side. Positions 28-49 (HCRSPIKAVCNFVCDCGDCSDE) constitute an LDL-receptor class A 1; truncated domain. The 159-residue stretch at 65 to 223 (FTCNFEQDSC…DDVEFRDCGL (159 aa)) folds into the MAM 1 domain. A glycan (N-linked (GlcNAc...) asparagine) is linked at Asn-204. The 39-residue stretch at 229–267 (RCPLGHHHCQNKACVEPHQLCDGEDNCGDRSDEDPLICS) folds into the LDL-receptor class A 2 domain. 3 disulfides stabilise this stretch: Cys-230/Cys-242, Cys-237/Cys-255, and Cys-249/Cys-266. The 157-residue stretch at 270–426 (MATDFETGLG…DLIMSSHCML (157 aa)) folds into the MAM 2 domain. Residues Asn-290 and Asn-340 are each glycosylated (N-linked (GlcNAc...) asparagine). Positions 457-492 (TCEPGHLSCGDLCVPPEQLCDFQKHCAEGEDEHKCG) constitute an LDL-receptor class A 3 domain. Intrachain disulfides connect Cys-458–Cys-469, Cys-465–Cys-482, and Cys-476–Cys-491. MAM domains follow at residues 492–649 (GTTD…DCNP), 659–815 (LSCN…PCWA), 817–975 (KSCS…PCPQ), and 977–1144 (GSCD…QCKQ). The N-linked (GlcNAc...) asparagine glycan is linked to Asn-641. N-linked (GlcNAc...) asparagine glycosylation is present at Asn-841. A helical membrane pass occupies residues 1160–1180 (VAVGGALLFFMFLVLMGLGGW). Over 1181 to 1228 (HWLQKQHCPGQRSTDAAASGFANILFNADHVTLPESITSNPQSPPDLA) the chain is Cytoplasmic.

The protein resides in the membrane. Probably involved in the sorting and selective transport of receptors and ligands across polarized epithelia. The protein is Apical endosomal glycoprotein of Mus musculus (Mouse).